A 365-amino-acid polypeptide reads, in one-letter code: Histidinol-phosphate aminotransferase (365 aa).

An N6-(pyridoxal phosphate)lysine modification is found at K223.

This sequence belongs to the class-II pyridoxal-phosphate-dependent aminotransferase family. Histidinol-phosphate aminotransferase subfamily. As to quaternary structure, homodimer. Pyridoxal 5'-phosphate is required as a cofactor.

It carries out the reaction L-histidinol phosphate + 2-oxoglutarate = 3-(imidazol-4-yl)-2-oxopropyl phosphate + L-glutamate. The protein operates within amino-acid biosynthesis; L-histidine biosynthesis; L-histidine from 5-phospho-alpha-D-ribose 1-diphosphate: step 7/9. The protein is Histidinol-phosphate aminotransferase of Brucella abortus (strain 2308).